We begin with the raw amino-acid sequence, 623 residues long: Chaperone protein DnaK (623 aa).

T175 is subject to Phosphothreonine; by autocatalysis. The segment at 580-623 (PEGAQGAGFDPNNMGGANAGNASAENDKKDDNVVDADYKVEDDK) is disordered. Residues 591 to 603 (NNMGGANAGNASA) show a composition bias toward low complexity. A compositionally biased stretch (basic and acidic residues) spans 604-623 (ENDKKDDNVVDADYKVEDDK).

This sequence belongs to the heat shock protein 70 family.

Functionally, acts as a chaperone. This chain is Chaperone protein DnaK, found in Clostridium botulinum (strain Okra / Type B1).